Consider the following 208-residue polypeptide: Large ribosomal subunit protein uL3 (208 aa).

Position 149 is an N5-methylglutamine (glutamine 149).

It belongs to the universal ribosomal protein uL3 family. In terms of assembly, part of the 50S ribosomal subunit. Forms a cluster with proteins L14 and L19. Methylated by PrmB.

Functionally, one of the primary rRNA binding proteins, it binds directly near the 3'-end of the 23S rRNA, where it nucleates assembly of the 50S subunit. The chain is Large ribosomal subunit protein uL3 from Glaesserella parasuis serovar 5 (strain SH0165) (Haemophilus parasuis).